A 22-amino-acid polypeptide reads, in one-letter code: Protein YncP (22 aa).

The polypeptide is Protein YncP (Escherichia coli (strain K12)).